A 1360-amino-acid chain; its full sequence is DNA-directed RNA polymerase subunit beta (1360 aa).

It belongs to the RNA polymerase beta chain family. The RNAP catalytic core consists of 2 alpha, 1 beta, 1 beta' and 1 omega subunit. When a sigma factor is associated with the core the holoenzyme is formed, which can initiate transcription.

The enzyme catalyses RNA(n) + a ribonucleoside 5'-triphosphate = RNA(n+1) + diphosphate. Its function is as follows. DNA-dependent RNA polymerase catalyzes the transcription of DNA into RNA using the four ribonucleoside triphosphates as substrates. This chain is DNA-directed RNA polymerase subunit beta, found in Caulobacter sp. (strain K31).